Consider the following 370-residue polypeptide: D-aspartate oxidase (370 aa).

The signal sequence occupies residues 1 to 18 (MPPRIIILGAGIIGLSTA). FAD contacts are provided by I13, E42, A63, S64, and G68. N207 carries N-linked (GlcNAc...) asparagine glycosylation. 3 residues coordinate FAD: R308, G338, and Y339.

The protein belongs to the DAMOX/DASOX family. In terms of assembly, monomer. FAD serves as cofactor.

It catalyses the reaction D-aspartate + O2 + H2O = oxaloacetate + H2O2 + NH4(+). The catalysed reaction is D-glutamate + O2 + H2O = H2O2 + 2-oxoglutarate + NH4(+). Selectively catalyzes the oxidative deamination of acidic amino acids. Protects the organism from the toxicity of D-amino acids. Enables the organism to utilize D-amino acids as a source of nutrients. This Talaromyces thermophilus protein is D-aspartate oxidase.